Here is a 1481-residue protein sequence, read N- to C-terminus: Cystic fibrosis transmembrane conductance regulator (1481 aa).

Topologically, residues 1 to 77 (MQRSPLEKAS…KLINALRRCF (77 aa)) are cytoplasmic. A helical membrane pass occupies residues 78-98 (FWRFMFYGILLYLGEVTKAVQ). An ABC transmembrane type-1 1 domain is found at 81-365 (FMFYGILLYL…WAVQTWYDSL (285 aa)). Residues 99–122 (PLLLGRIIASYDPDNKEERSIAIY) lie on the Extracellular side of the membrane. Residues 123-146 (LGIGLCLLFIVRTLLLHPAIFGLH) form a helical membrane-spanning segment. Residues 147-195 (HIGMQMRIAMFSLIYKKTLKLSSRVLDKISIGQLVSLLSNNLNKFDEGL) are Cytoplasmic-facing. The helical transmembrane segment at 196-216 (ALAHFVWIVPLQVALLMGLIW) threads the bilayer. Residues 217–222 (ELLQAS) are Extracellular-facing. The chain crosses the membrane as a helical span at residues 223-243 (AFCGLGFLIVLALFQAGLGRM). At 244–298 (MMKYRDQRAGKINERLVITSEMIENIQSVKAYCWEEAMEKMIENLRQTELKLTRK) the chain is on the cytoplasmic side. The chain crosses the membrane as a helical span at residues 299–319 (AAYVRYFNSSAFFFSGFFVVF). Residues 320–339 (LSVLPYALIKGIVLRKIFTT) are Extracellular-facing. Residues 340–358 (ISFCIVLRMAVTRQFPWAV) form a helical membrane-spanning segment. The Cytoplasmic portion of the chain corresponds to 359 to 858 (QTWYDSLGAI…YLRYITVHKS (500 aa)). Residues Trp401, Ser434, 458–465 (GSTGAGKT), and Gln493 each bind ATP. The region spanning 423-646 (NDDDSLFFSN…RPDFSSKLMG (224 aa)) is the ABC transporter 1 domain. Cys524 carries the S-palmitoyl cysteine lipid modification. Residues Ser549 and Ser660 each carry the phosphoserine modification. Residues 654–831 (SAERRNSILT…EEINEEDLKE (178 aa)) are disordered R region. Residue Ser670 is modified to Phosphoserine; by PKA. Ser686 is subject to Phosphoserine. Residue Lys688 forms a Glycyl lysine isopeptide (Lys-Gly) (interchain with G-Cter in ubiquitin) linkage. 2 positions are modified to phosphoserine: Ser700 and Ser712. Thr717 carries the post-translational modification Phosphothreonine. A phosphoserine mark is found at Ser737, Ser753, Ser768, Ser790, Ser795, and Ser813. The chain crosses the membrane as a helical span at residues 859–879 (LIFVLIWCLVIFLAEVAASLV). In terms of domain architecture, ABC transmembrane type-1 2 spans 859–1155 (LIFVLIWCLV…AVNSSIDVDS (297 aa)). Residues 880–918 (VLWFLGNTPPQDKGNSTYSRNNSYAVIITRTSSYYVFYI) lie on the Extracellular side of the membrane. Residues Asn894 and Asn900 are each glycosylated (N-linked (GlcNAc...) asparagine). The chain crosses the membrane as a discontinuously helical span at residues 919 to 939 (YVGVADTLLAMGFFRGLPLVH). The Cytoplasmic segment spans residues 940 to 990 (TLITVSKILHHKMLHSVLQAPMSTLNTLKAGGILNRFSKDIAILDDLLPLT). A helical transmembrane segment spans residues 991–1011 (IFDFIQLLLIVIGAIAVVAVL). Residues 1012-1013 (QP) are Extracellular-facing. Residues 1014 to 1034 (YIFVATVPVIVAFIMLRAYFL) form a helical membrane-spanning segment. Residues 1035–1095 (QTSQQLKQLE…TANWFLYLST (61 aa)) lie on the Cytoplasmic side of the membrane. A helical membrane pass occupies residues 1096 to 1116 (LRWFQMRIEMIFVIFFIAVTF). Residues 1117–1130 (ISILTTGEGEGTVG) lie on the Extracellular side of the membrane. Residues 1131 to 1151 (IILTLAMNIMSTLQWAVNSSI) form a helical membrane-spanning segment. Residues 1152–1481 (DVDSLMRSVS…TEEEVQDTRL (330 aa)) lie on the Cytoplasmic side of the membrane. The 234-residue stretch at 1211-1444 (MTVKDLTAKY…RSLFQQAISP (234 aa)) folds into the ABC transporter 2 domain. Residues Tyr1220 and 1245 to 1252 (GRTGSGKS) contribute to the ATP site. The interval 1387 to 1481 (RTLKQAFADC…TEEEVQDTRL (95 aa)) is interaction with GORASP2. Cys1396 carries S-palmitoyl cysteine lipidation. Phosphoserine occurs at positions 1445 and 1457. Residues 1479–1481 (TRL) carry the PDZ-binding motif.

The protein belongs to the ABC transporter superfamily. ABCC family. CFTR transporter (TC 3.A.1.202) subfamily. In terms of assembly, monomer; does not require oligomerization for channel activity. May form oligomers in the membrane. Interacts with SLC26A3, SLC26A6 and NHERF1. Interacts with SHANK2. Interacts with MYO6. Interacts (via C-terminus) with GOPC (via PDZ domain); this promotes CFTR internalization and thereby decreases channel activity. Interacts with SLC4A7 through NHERF1. Found in a complex with MYO5B and RAB11A. Interacts with ANO1. Interacts with SLC26A8. Interacts with AHCYL1; the interaction increases CFTR activity. Interacts with CSE1L. The core-glycosylated form interacts with GORASP2 (via PDZ GRASP-type 1 domain) in respone to ER stress. Interacts with MARCHF2; the interaction leads to CFTR ubiqtuitination and degradation. Interacts with ADGRG2. In terms of processing, N-glycosylated. Post-translationally, phosphorylated; cAMP treatment promotes phosphorylation and activates the channel. Dephosphorylation decreases the ATPase activity (in vitro). Phosphorylation at PKA sites activates the channel. Phosphorylation at PKC sites enhances the response to phosphorylation by PKA. Phosphorylated by AMPK; this inhibits channel activity. Ubiquitinated, leading to its degradation in the lysosome. Deubiquitination by USP10 in early endosomes enhances its endocytic recycling to the cell membrane. Ubiquitinated by RNF185 during ER stress. Ubiquitinated by MARCHF2.

The protein localises to the apical cell membrane. It is found in the early endosome membrane. The protein resides in the cell membrane. Its subcellular location is the recycling endosome membrane. It localises to the endoplasmic reticulum membrane. The protein localises to the nucleus. It catalyses the reaction ATP + H2O + closed Cl(-) channel = ADP + phosphate + open Cl(-) channel.. It carries out the reaction chloride(in) = chloride(out). The enzyme catalyses hydrogencarbonate(in) = hydrogencarbonate(out). The catalysed reaction is ATP + H2O = ADP + phosphate + H(+). Epithelial ion channel that plays an important role in the regulation of epithelial ion and water transport and fluid homeostasis. Mediates the transport of chloride ions across the cell membrane. Possesses an intrinsic ATPase activity and utilizes ATP to gate its channel; the passive flow of anions through the channel is gated by cycles of ATP binding and hydrolysis by the ATP-binding domains. The ion channel is also permeable to HCO(3)(-); selectivity depends on the extracellular chloride concentration. Exerts its function also by modulating the activity of other ion channels and transporters. Contributes to the regulation of the pH and the ion content of the epithelial fluid layer. Modulates the activity of the epithelial sodium channel (ENaC) complex, in part by regulating the cell surface expression of the ENaC complex. May regulate bicarbonate secretion and salvage in epithelial cells by regulating the transporter SLC4A7. Can inhibit the chloride channel activity of ANO1. Plays a role in the chloride and bicarbonate homeostasis during sperm epididymal maturation and capacitation. The sequence is that of Cystic fibrosis transmembrane conductance regulator from Macaca nemestrina (Pig-tailed macaque).